The chain runs to 174 residues: UPF0113 protein AF_0058 (174 aa).

One can recognise a PUA domain in the interval 87–161; sequence RNRVWVNERG…KVFVENLVDR (75 aa).

It belongs to the UPF0113 family.

The protein is UPF0113 protein AF_0058 of Archaeoglobus fulgidus (strain ATCC 49558 / DSM 4304 / JCM 9628 / NBRC 100126 / VC-16).